A 282-amino-acid chain; its full sequence is Shikimate dehydrogenase (NADP(+)) (282 aa).

Residues Ser16–Ser18 and Thr63 contribute to the shikimate site. Lys67 serves as the catalytic Proton acceptor. 2 residues coordinate shikimate: Asn88 and Asp103. NADP(+) is bound by residues Gly128–Ala132 and Leu219. Tyr221 contributes to the shikimate binding site. NADP(+) is bound at residue Gly243.

It belongs to the shikimate dehydrogenase family. In terms of assembly, homodimer.

It carries out the reaction shikimate + NADP(+) = 3-dehydroshikimate + NADPH + H(+). It participates in metabolic intermediate biosynthesis; chorismate biosynthesis; chorismate from D-erythrose 4-phosphate and phosphoenolpyruvate: step 4/7. Its function is as follows. Involved in the biosynthesis of the chorismate, which leads to the biosynthesis of aromatic amino acids. Catalyzes the reversible NADPH linked reduction of 3-dehydroshikimate (DHSA) to yield shikimate (SA). In Xylella fastidiosa (strain M12), this protein is Shikimate dehydrogenase (NADP(+)).